The following is a 451-amino-acid chain: Acetylornithine aminotransferase, mitochondrial (451 aa).

Lys-302 carries the post-translational modification N6-(pyridoxal phosphate)lysine.

Belongs to the class-III pyridoxal-phosphate-dependent aminotransferase family. The cofactor is pyridoxal 5'-phosphate. As to expression, found at highest levels in nodules, confined to the infected cells.

Its subcellular location is the mitochondrion. The enzyme catalyses N(2)-acetyl-L-ornithine + 2-oxoglutarate = N-acetyl-L-glutamate 5-semialdehyde + L-glutamate. The protein operates within amino-acid biosynthesis; L-arginine biosynthesis; N(2)-acetyl-L-ornithine from L-glutamate: step 4/4. Functionally, involved in the biosynthesis of citrulline. The protein is Acetylornithine aminotransferase, mitochondrial (AG118) of Alnus glutinosa (European alder).